The primary structure comprises 349 residues: Anthranilate phosphoribosyltransferase (349 aa).

5-phospho-alpha-D-ribose 1-diphosphate-binding positions include Gly82, 85–86, Thr90, 92–95, 110–118, and Gly122; these read GD, NVST, and KHGNRSVSS. Gly82 is an anthranilate binding site. Ser94 serves as a coordination point for Mg(2+). Asn113 is a binding site for anthranilate. Anthranilate is bound at residue Arg168. Mg(2+)-binding residues include Asp232 and Glu233.

This sequence belongs to the anthranilate phosphoribosyltransferase family. Homodimer. The cofactor is Mg(2+).

It carries out the reaction N-(5-phospho-beta-D-ribosyl)anthranilate + diphosphate = 5-phospho-alpha-D-ribose 1-diphosphate + anthranilate. Its pathway is amino-acid biosynthesis; L-tryptophan biosynthesis; L-tryptophan from chorismate: step 2/5. Its function is as follows. Catalyzes the transfer of the phosphoribosyl group of 5-phosphorylribose-1-pyrophosphate (PRPP) to anthranilate to yield N-(5'-phosphoribosyl)-anthranilate (PRA). The sequence is that of Anthranilate phosphoribosyltransferase from Methanosphaera stadtmanae (strain ATCC 43021 / DSM 3091 / JCM 11832 / MCB-3).